The primary structure comprises 126 residues: uncharacterized protein (126 aa).

The HIT domain maps to 19–126 (IFERIIEGAV…LGGGLLGSIA (108 aa)). The short motif at 111 to 115 (HLHIH) is the Histidine triad motif element.

This is an uncharacterized protein from Chlamydia muridarum (strain MoPn / Nigg).